We begin with the raw amino-acid sequence, 77 residues long: Protein AC145 (77 aa).

It is found in the host nucleus. The protein resides in the virion. Functionally, plays a role in primary oral infection of the host. This chain is Protein AC145, found in Autographa californica nuclear polyhedrosis virus (AcMNPV).